The chain runs to 946 residues: Bifunctional glutamine synthetase adenylyltransferase/adenylyl-removing enzyme (946 aa).

The segment at 1-441 (MSLLNDAALH…EFNWVIGDDE (441 aa)) is adenylyl removase. An adenylyl transferase region spans residues 448 to 946 (DQALSELWAL…VIKIWEKFLD (499 aa)).

Belongs to the GlnE family. Requires Mg(2+) as cofactor.

The catalysed reaction is [glutamine synthetase]-O(4)-(5'-adenylyl)-L-tyrosine + phosphate = [glutamine synthetase]-L-tyrosine + ADP. It catalyses the reaction [glutamine synthetase]-L-tyrosine + ATP = [glutamine synthetase]-O(4)-(5'-adenylyl)-L-tyrosine + diphosphate. In terms of biological role, involved in the regulation of glutamine synthetase GlnA, a key enzyme in the process to assimilate ammonia. When cellular nitrogen levels are high, the C-terminal adenylyl transferase (AT) inactivates GlnA by covalent transfer of an adenylyl group from ATP to specific tyrosine residue of GlnA, thus reducing its activity. Conversely, when nitrogen levels are low, the N-terminal adenylyl removase (AR) activates GlnA by removing the adenylyl group by phosphorolysis, increasing its activity. The regulatory region of GlnE binds the signal transduction protein PII (GlnB) which indicates the nitrogen status of the cell. The polypeptide is Bifunctional glutamine synthetase adenylyltransferase/adenylyl-removing enzyme (Psychromonas ingrahamii (strain DSM 17664 / CCUG 51855 / 37)).